A 329-amino-acid chain; its full sequence is U5 small nuclear ribonucleoprotein TSSC4 (329 aa).

Disordered stretches follow at residues 1–88 (MAEA…MSST) and 104–156 (ARRA…PDYV). Residues 22-41 (DTLPSDTVSLSDSDSDLSLP) are compositionally biased toward low complexity. 6 positions are modified to phosphoserine: Ser-60, Ser-67, Ser-86, Ser-132, Ser-143, and Ser-146. The tract at residues 77–104 (VQPFHLRGMSSTFSQRSRDIFDCLEGAA) is hom2; mediates interaction with the U5 snRNP complexes and required for spliceosomal tri-snRNP complex assembly. Positions 149–316 (VPPVPDYVAH…SRKRSRDHFR (168 aa)) are interaction with SNRNP200. The interval 150–186 (PPVPDYVAHPERWTKYSLEDVTEVSEQSNQATALAFL) is hom3; mediates interaction with the U5 snRNP complexes. Residues 201-250 (FNQDPSSCGEGRVIFTKPVRGVEARHERKRVLGKVGEPGRGGLGNPATDR) form a hom4; necessary for interaction with the PRPF19 complex and required for spliceosomal tri-snRNP complex assembly region. Lys-217 bears the N6-acetyllysine mark. The tract at residues 221–329 (GVEARHERKR…SSPEDPGAEV (109 aa)) is disordered. Phosphoserine is present on Ser-265. Residues 306–317 (GSRKRSRDHFRN) show a composition bias toward basic residues. Residue Ser-321 is modified to Phosphoserine.

Belongs to the TSSC4 family. Interacts in a RNA-independent manner with distinct U5 snRNP-containing complexes, the mono-U5 snRNP and the post-splicing U5 snRNP-PRPF19 complex. Interacts with SNRNP200; the interaction is direct, excludes recruitment of C9ORF78 and WBP4 to SNRNP200 and negatively regulates its RNA helicase activity. Interacts with PRPF8; the interaction is direct. Expressed in fetal brain, lung, liver and kidney. Widely expressed in adult tissues.

The protein resides in the nucleus. The protein localises to the cytoplasm. In terms of biological role, protein associated with the U5 snRNP, during its maturation and its post-splicing recycling and which is required for spliceosomal tri-snRNP complex assembly in the nucleus. Has a molecular sequestering activity and transiently hinders SNRNP200 binding sites for constitutive splicing factors that intervene later during the assembly of the spliceosome and splicing. Together with its molecular sequestering activity, may also function as a molecular adapter and placeholder, coordinating the assembly of the U5 snRNP and its association with the U4/U6 di-snRNP. The protein is U5 small nuclear ribonucleoprotein TSSC4 of Homo sapiens (Human).